The sequence spans 287 residues: Xyloglucan endotransglucosylase protein 1 (287 aa).

An N-terminal signal peptide occupies residues 1 to 28 (MAFMSFINGFSTLFLVALLASSMMAAKG). The GH16 domain occupies 29–219 (GNFYQDFDVT…WTKAPFTAYY (191 aa)). The active-site Nucleophile is Glu-105. The active-site Proton donor is Glu-109. Residue Glu-109 coordinates xyloglucan. Asn-113 carries N-linked (GlcNAc...) asparagine glycosylation. Xyloglucan-binding positions include 122-124 (HTN), 132-134 (NRE), 198-199 (DW), and Gly-203. 2 disulfides stabilise this stretch: Cys-227/Cys-231 and Cys-266/Cys-280. Arg-271 provides a ligand contact to xyloglucan.

This sequence belongs to the glycosyl hydrolase 16 family. XTH group 2 subfamily. Contains at least one intrachain disulfide bond essential for its enzymatic activity. Expressed in fruit pulp. Expressed in leaves, flowers, calyces, stems and fruits. Highest expression in leaves and lowest in fruits.

Its subcellular location is the secreted. It localises to the cell wall. The protein localises to the extracellular space. It is found in the apoplast. It carries out the reaction breaks a beta-(1-&gt;4) bond in the backbone of a xyloglucan and transfers the xyloglucanyl segment on to O-4 of the non-reducing terminal glucose residue of an acceptor, which can be a xyloglucan or an oligosaccharide of xyloglucan.. Its function is as follows. Catalyzes xyloglucan endotransglycosylation (XET). Cleaves and religates xyloglucan polymers. Does not catalyze xyloglucan endohydrolysis (XEH). Overexpression in Arabidopsis transgenic plants results in elevated tolerance to abiotic stress, such as salt, ABA (abscisic acid) and drought stresses, and in the production of wider leaves. Overexpression in transgenic tomato plants slows down fruit ripening and softening, and the plants produce larger fruits. Both transgenic plants have larger and more irregular cells. Moreover, the fruits of the transgenic tomato have higher density of cell wall and intercellular spaces. May provide cells with more strength and thickness to maintain structural integrity. Probably involved in cell wall assembly and synthesis in fast growing tissues and in the maintenance of firmness in mature fruits. The polypeptide is Xyloglucan endotransglucosylase protein 1 (Diospyros kaki (Kaki persimmon)).